We begin with the raw amino-acid sequence, 73 residues long: U-scoloptoxin(15)-Sa1a (73 aa).

The signal sequence occupies residues 1 to 20; it reads MKFHIIFCLLAALMMTSAFA.

It belongs to the scoloptoxin-15 family. Contains 2 disulfide bonds. Expressed by the venom gland.

The protein localises to the secreted. This Scolopendra alternans (Florida Keys giant centipede) protein is U-scoloptoxin(15)-Sa1a.